We begin with the raw amino-acid sequence, 315 residues long: Calumenin-A (315 aa).

Residues 1 to 19 form the signal peptide; the sequence is MEIRPLLMCFALCVVYATS. EF-hand domains follow at residues 68-103, 104-139, 151-186, 188-223, 229-264, and 265-300; these read ESKN…AQKK, YIYD…TYLD, QMMA…EEYE, MKDI…HEDE, WVAT…ADYD, and HAEA…FVGS. 9 residues coordinate Ca(2+): Asp81, Asp83, Asp85, Glu92, Asp117, Asn119, Asp121, Met123, and Glu128. N-linked (GlcNAc...) asparagine glycosylation occurs at Asn131. Ca(2+)-binding residues include Asp164, Asn166, Asp168, Glu175, Asp201, Asn203, Asp205, Glu212, Asp242, Asn244, Asp246, Lys248, Glu253, Asp278, Asn280, Asp282, Lys284, and Glu289. Residues 312 to 315 carry the Prevents secretion from ER motif; the sequence is HDEF.

The protein belongs to the CREC family. As to quaternary structure, interacts with ggcx.

The protein resides in the endoplasmic reticulum membrane. The protein localises to the golgi apparatus. Its subcellular location is the secreted. It localises to the melanosome. It is found in the sarcoplasmic reticulum lumen. Functionally, involved in regulation of vitamin K-dependent carboxylation of multiple N-terminal glutamate residues. Seems to inhibit gamma-carboxylase ggcx. Binds 7 calcium ions with a low affinity. This Danio rerio (Zebrafish) protein is Calumenin-A (calua).